Reading from the N-terminus, the 486-residue chain is Maintenance of mitochondrial morphology protein 1 (486 aa).

Topologically, residues 1-20 (MNFQQSAIPPFSFLLSFTQG) are lumenal. The helical transmembrane segment at 21-41 (FLLGQLSVVLLIGAFIKFFIF) threads the bilayer. Topologically, residues 42–486 (GEAPPPPSRG…GSLPDGAVGN (445 aa)) are cytoplasmic. Disordered regions lie at residues 70–96 (TNEA…SSST), 271–320 (TPPL…SPKS), and 387–486 (RTGV…AVGN). Positions 83–96 (STSNVLRPVPSSST) are enriched in polar residues. The SMP-LTD domain occupies 128-379 (QPESLDWFNV…EPRVQVVGLP (252 aa)). Residues 271–282 (TPPLHTPSPSPA) are compositionally biased toward pro residues. A compositionally biased stretch (low complexity) spans 292-306 (QSQPENNSSNPNQQS). 2 stretches are compositionally biased toward polar residues: residues 398-407 (TGSNAASRSA) and 440-450 (DSVSRSSSFNV). Over residues 460–474 (MTREDSRGAISDDFH) the composition is skewed to basic and acidic residues.

This sequence belongs to the MMM1 family. As to quaternary structure, homodimer. Component of the ER-mitochondria encounter structure (ERMES) or MDM complex, composed of mmm1, mdm10, mdm12 and mdm34. A mmm1 homodimer associates with one molecule of mdm12 on each side in a pairwise head-to-tail manner, and the SMP-LTD domains of mmm1 and mdm12 generate a continuous hydrophobic tunnel for phospholipid trafficking.

Its subcellular location is the endoplasmic reticulum membrane. Functionally, component of the ERMES/MDM complex, which serves as a molecular tether to connect the endoplasmic reticulum (ER) and mitochondria. Components of this complex are involved in the control of mitochondrial shape and protein biogenesis, and function in nonvesicular lipid trafficking between the ER and mitochondria. The mdm12-mmm1 subcomplex functions in the major beta-barrel assembly pathway that is responsible for biogenesis of all outer membrane beta-barrel proteins, and acts in a late step after the SAM complex. The mdm10-mdm12-mmm1 subcomplex further acts in the TOM40-specific pathway after the action of the mdm12-mmm1 complex. Essential for establishing and maintaining the structure of mitochondria and maintenance of mtDNA nucleoids. The protein is Maintenance of mitochondrial morphology protein 1 of Aspergillus terreus (strain NIH 2624 / FGSC A1156).